The following is a 523-amino-acid chain: Exodeoxyribonuclease 7 large subunit (523 aa).

The tract at residues 502–523 (PGASPAARTRAGKAKADQGSLF) is disordered.

Belongs to the XseA family. In terms of assembly, heterooligomer composed of large and small subunits.

It is found in the cytoplasm. It catalyses the reaction Exonucleolytic cleavage in either 5'- to 3'- or 3'- to 5'-direction to yield nucleoside 5'-phosphates.. Functionally, bidirectionally degrades single-stranded DNA into large acid-insoluble oligonucleotides, which are then degraded further into small acid-soluble oligonucleotides. This Rhodospirillum centenum (strain ATCC 51521 / SW) protein is Exodeoxyribonuclease 7 large subunit.